Here is a 438-residue protein sequence, read N- to C-terminus: Xylose isomerase (438 aa).

Active-site residues include His-103 and Asp-106. Residues Glu-234, Glu-270, His-273, Asp-298, Asp-309, Asp-311, and Asp-341 each contribute to the Mg(2+) site.

It belongs to the xylose isomerase family. Homotetramer. Mg(2+) is required as a cofactor.

The protein resides in the cytoplasm. The catalysed reaction is alpha-D-xylose = alpha-D-xylulofuranose. This chain is Xylose isomerase, found in Bacteroides thetaiotaomicron (strain ATCC 29148 / DSM 2079 / JCM 5827 / CCUG 10774 / NCTC 10582 / VPI-5482 / E50).